The chain runs to 818 residues: Glycerol-3-phosphate acyltransferase (818 aa).

Residues 308–313 carry the HXXXXD motif motif; that stretch reads CHRSHM.

This sequence belongs to the GPAT/DAPAT family.

The protein localises to the cell inner membrane. It carries out the reaction sn-glycerol 3-phosphate + an acyl-CoA = a 1-acyl-sn-glycero-3-phosphate + CoA. Its pathway is phospholipid metabolism; CDP-diacylglycerol biosynthesis; CDP-diacylglycerol from sn-glycerol 3-phosphate: step 1/3. The polypeptide is Glycerol-3-phosphate acyltransferase (Alteromonas mediterranea (strain DSM 17117 / CIP 110805 / LMG 28347 / Deep ecotype)).